Reading from the N-terminus, the 392-residue chain is Cell division protein FtsZ (392 aa).

GTP contacts are provided by residues 24 to 28 (GGGCN), 111 to 113 (GTG), glutamate 142, arginine 145, and aspartate 189.

The protein belongs to the FtsZ family. As to quaternary structure, homodimer. Polymerizes to form a dynamic ring structure in a strictly GTP-dependent manner. Interacts directly with several other division proteins.

It is found in the cytoplasm. Its function is as follows. Essential cell division protein that forms a contractile ring structure (Z ring) at the future cell division site. The regulation of the ring assembly controls the timing and the location of cell division. One of the functions of the FtsZ ring is to recruit other cell division proteins to the septum to produce a new cell wall between the dividing cells. Binds GTP and shows GTPase activity. The chain is Cell division protein FtsZ from Neisseria gonorrhoeae.